The chain runs to 427 residues: Serine/arginine (SR)-type shuttling mRNA binding protein GBP2 (427 aa).

Positions 1–101 (MERELGMYGN…GRGGGRGRTL (101 aa)) are disordered. Residues 22-32 (RLSDDRDRYDD) are compositionally biased toward basic and acidic residues. Phosphoserine is present on S24. Positions 35–44 (DSSSNNGNGS) are enriched in low complexity. The span at 50–60 (DRGSRFNDRYD) shows a compositional bias: basic and acidic residues. 2 consecutive RRM domains span residues 122–198 (NSIF…QDNP) and 219–296 (FEVF…EGRF). The residue at position 130 (T130) is a Phosphothreonine. Positions 300-317 (KNNDRYNQRREDLEDTRG) are enriched in basic and acidic residues. Positions 300 to 319 (KNNDRYNQRREDLEDTRGTE) are disordered. One can recognise an RRM 3 domain in the interval 349-426 (CFIYCSNLPF…CSLQISYARR (78 aa)).

Post-translationally, methylated by HMT1.

The protein resides in the cytoplasm. Its subcellular location is the nucleus. The protein localises to the chromosome. It localises to the telomere. It is found in the P-body. The protein resides in the stress granule. Functionally, binds to intron-containing transcripts and is involved in quality control for the export of spliced mRNAs from the nucleus. Binds to pre-mRNAs until splicing is completed or until faulty mRNAs are degraded. On correctly spliced mRNAs, GBP2 and HRB1 recruit MEX67 to allow nuclear export. On faulty mRNAs, GBP2 and HRB1 associate with the TRAMP complex that guides those pre-mRNAs to the exosome for degradation. Binds single-stranded telomeric sequences of the type (TG[1-3])n in vitro. Influences the localization of RAP1 in the nuclei. Involved in modulating telomere length. The sequence is that of Serine/arginine (SR)-type shuttling mRNA binding protein GBP2 from Saccharomyces cerevisiae (strain ATCC 204508 / S288c) (Baker's yeast).